Reading from the N-terminus, the 808-residue chain is N-terminal kinase-like protein (808 aa).

Residues F14–L314 form the Protein kinase domain. 3 HEAT repeats span residues I350 to Q388, I389 to E427, and I507 to T545. Disordered regions lie at residues V540–A566, S587–D646, and S658–D808. Low complexity predominate over residues A556–A566. The span at S587–Q600 shows a compositional bias: polar residues. Positions R601–A617 are enriched in pro residues. A compositionally biased stretch (polar residues) spans L660 to N680. Over residues S681–E690 the composition is skewed to basic and acidic residues. Position 754 is a phosphoserine (S754). Over residues W755–E764 the composition is skewed to acidic residues. Residues E761–K797 adopt a coiled-coil conformation. Basic and acidic residues-rich tracts occupy residues T765–A775 and R782–V795. The segment at R793–D808 is interaction with COPB1.

This sequence belongs to the protein kinase superfamily. Interacts with GORAB. Interacts with COPA, COPB1 and COPB2. Homooligomer. Interacts with AP2B1. As to expression, ubiquitous.

Its subcellular location is the cytoplasm. It localises to the cytoskeleton. The protein resides in the microtubule organizing center. It is found in the centrosome. The protein localises to the endoplasmic reticulum-Golgi intermediate compartment. Its subcellular location is the golgi apparatus. It localises to the cis-Golgi network. The protein resides in the nucleus. Its function is as follows. Regulates COPI-mediated retrograde protein traffic at the interface between the Golgi apparatus and the endoplasmic reticulum. Involved in the maintenance of the Golgi apparatus morphology. Functionally, acts as a transcriptional activator. It binds to three different types of GC-rich DNA binding sites (box-A, -B and -C) in the beta-polymerase promoter region. It also binds to the TERT promoter region. This Homo sapiens (Human) protein is N-terminal kinase-like protein (SCYL1).